Reading from the N-terminus, the 390-residue chain is Transaldolase (390 aa).

Lysine 135 acts as the Schiff-base intermediate with substrate in catalysis. 2 consecutive EF-hand domains span residues 329 to 364 (AFCHVVQEIFMLNDLDGDGCITREEWLGSDAVFDAL) and 365 to 388 (DHDHDGRLLQEDVRSGLGAALALT). The Ca(2+) site is built by aspartate 342, aspartate 344, aspartate 346, cysteine 348, glutamate 353, aspartate 365, aspartate 367, aspartate 369, arginine 371, and aspartate 376.

It belongs to the transaldolase family. Type 1 subfamily.

It is found in the cytoplasm. It catalyses the reaction D-sedoheptulose 7-phosphate + D-glyceraldehyde 3-phosphate = D-erythrose 4-phosphate + beta-D-fructose 6-phosphate. Its pathway is carbohydrate degradation; pentose phosphate pathway; D-glyceraldehyde 3-phosphate and beta-D-fructose 6-phosphate from D-ribose 5-phosphate and D-xylulose 5-phosphate (non-oxidative stage): step 2/3. In terms of biological role, transaldolase is important for the balance of metabolites in the pentose-phosphate pathway. This Prochlorococcus marinus (strain MIT 9313) protein is Transaldolase.